A 27-amino-acid polypeptide reads, in one-letter code: Palustrin-1d (27 aa).

C21 and C27 are oxidised to a cystine.

As to expression, expressed by the skin glands.

It localises to the secreted. Functionally, antimicrobial activity against Gram-negative bacterium E.coli. The protein is Palustrin-1d of Lithobates palustris (Pickerel frog).